The sequence spans 585 residues: RNA polymerase sigma factor RpoD (585 aa).

Positions 67 to 93 (PASTLVPKDDSKPARKKKESSASTSGS) are disordered. The tract at residues 351-421 (LVKANLRLVV…TRAISDQART (71 aa)) is sigma-70 factor domain-2. Residues 375-378 (DLIQ) carry the Interaction with polymerase core subunit RpoC motif. The sigma-70 factor domain-3 stretch occupies residues 430 to 506 (EQVNKVIRET…DTEVETPVNA (77 aa)). The interval 519-572 (VLHTLPAREQKVIRMRFGLDDGYPQTLEEVGYQFKVTRERIRQIEAKALRRLRH) is sigma-70 factor domain-4. Positions 545 to 564 (LEEVGYQFKVTRERIRQIEA) form a DNA-binding region, H-T-H motif.

Belongs to the sigma-70 factor family. RpoD/SigA subfamily. Interacts transiently with the RNA polymerase catalytic core.

The protein localises to the cytoplasm. In terms of biological role, sigma factors are initiation factors that promote the attachment of RNA polymerase to specific initiation sites and are then released. This sigma factor is the primary sigma factor during exponential growth. In Leptospira interrogans serogroup Icterohaemorrhagiae serovar copenhageni (strain Fiocruz L1-130), this protein is RNA polymerase sigma factor RpoD.